The chain runs to 1359 residues: ABC transporter C family member 1 (1359 aa).

The region spanning 111–394 (NKLTIFLQIL…LPNSIQQLQS (284 aa)) is the ABC transmembrane type-1 1 domain. A run of 6 helical transmembrane segments spans residues 119–139 (ILTN…IQFI), 147–167 (SFLA…SYTF), 214–234 (LLSV…MGIF), 244–264 (LALL…IMVI), 332–352 (MIFW…VLVL), and 363–383 (ITLE…IPLL). The disordered stretch occupies residues 409–478 (PEIQQNHSSN…QQQQQQQQQQ (70 aa)). Residues 420 to 433 (EEEEEDEYDDDINS) are compositionally biased toward acidic residues. A compositionally biased stretch (polar residues) spans 440–450 (HNGSFNWNQVD). The span at 459–478 (GNQQQQQQQQQQQQQQQQQQ) shows a compositional bias: low complexity. The ABC transporter 1 domain maps to 470–690 (QQQQQQQQQQ…IDFESIMKTK (221 aa)). ATP is bound at residue 502–509 (GVVGSGKT). An ABC transmembrane type-1 2 domain is found at 763 to 1061 (LRVYKEYFKH…LEVKMNSVER (299 aa)). Helical transmembrane passes span 773 to 793 (GSSI…QIIY), 819 to 839 (IYLL…FMMA), 884 to 904 (VDLL…TVLV), 906 to 926 (IGIM…LIGI), and 999 to 1021 (WVAV…FSLF). A coiled-coil region spans residues 1073 to 1102 (NSKINFFRNEQQEEEEEEEEEFDFDNDDYD). Residues 1116-1350 (IEFRNVEIKY…QESRFSKLVK (235 aa)) enclose the ABC transporter 2 domain. Position 1150–1157 (1150–1157 (GRTGAGKS)) interacts with ATP.

Belongs to the ABC transporter superfamily. ABCC family. Conjugate transporter (TC 3.A.1.208) subfamily.

The protein resides in the membrane. The protein is ABC transporter C family member 1 (abcC1) of Dictyostelium discoideum (Social amoeba).